An 89-amino-acid polypeptide reads, in one-letter code: Small ribosomal subunit protein uS15 (89 aa).

Belongs to the universal ribosomal protein uS15 family. Part of the 30S ribosomal subunit. Forms a bridge to the 50S subunit in the 70S ribosome, contacting the 23S rRNA.

One of the primary rRNA binding proteins, it binds directly to 16S rRNA where it helps nucleate assembly of the platform of the 30S subunit by binding and bridging several RNA helices of the 16S rRNA. In terms of biological role, forms an intersubunit bridge (bridge B4) with the 23S rRNA of the 50S subunit in the ribosome. In Trichodesmium erythraeum (strain IMS101), this protein is Small ribosomal subunit protein uS15.